We begin with the raw amino-acid sequence, 512 residues long: Cytochrome P450 77A4 (512 aa).

Residues 9-29 (PTSLDFTFFAIIISGFVFIIT) traverse the membrane as a helical segment. Cys456 is a binding site for heme.

It belongs to the cytochrome P450 family. It depends on heme as a cofactor.

Its subcellular location is the membrane. In terms of biological role, catalyzes the epoxidation of physiological unsaturated fatty acids in vitro. Can use laurate, oleate, linoleate, linolenate and vernolate as substrate. The chain is Cytochrome P450 77A4 (CYP77A4) from Arabidopsis thaliana (Mouse-ear cress).